The chain runs to 260 residues: Hydroxyethylthiazole kinase 1 (260 aa).

M39 is a substrate binding site. The ATP site is built by R115 and T160. G187 contacts substrate.

This sequence belongs to the Thz kinase family. Requires Mg(2+) as cofactor.

The enzyme catalyses 5-(2-hydroxyethyl)-4-methylthiazole + ATP = 4-methyl-5-(2-phosphooxyethyl)-thiazole + ADP + H(+). Its pathway is cofactor biosynthesis; thiamine diphosphate biosynthesis; 4-methyl-5-(2-phosphoethyl)-thiazole from 5-(2-hydroxyethyl)-4-methylthiazole: step 1/1. Catalyzes the phosphorylation of the hydroxyl group of 4-methyl-5-beta-hydroxyethylthiazole (THZ). The sequence is that of Hydroxyethylthiazole kinase 1 from Streptococcus pneumoniae (strain JJA).